Reading from the N-terminus, the 144-residue chain is HTH-type transcriptional repressor NsrR (144 aa).

In terms of domain architecture, HTH rrf2-type spans 2-129 (QLTSFTDYGL…DKHTLLSLID (128 aa)). The H-T-H motif DNA-binding region spans 28-51 (ISKVTEVYGVSRNHMVKIINKLGQ). C91, C96, and C102 together coordinate [2Fe-2S] cluster.

[2Fe-2S] cluster is required as a cofactor.

Nitric oxide-sensitive repressor of genes involved in protecting the cell against nitrosative stress. May require iron for activity. The polypeptide is HTH-type transcriptional repressor NsrR (Photobacterium profundum (strain SS9)).